Consider the following 207-residue polypeptide: Protein dct-5 (207 aa).

Residues 13–33 (LNFILSIMNSYLFVLIVSIGF) traverse the membrane as a helical segment.

It is found in the membrane. Functionally, acts downstream of daf-16/foxo to suppress tumors induced by disruption of gld-1. Potentially a direct target of daf-15/foxo. This chain is Protein dct-5 (dct-5), found in Caenorhabditis elegans.